A 747-amino-acid chain; its full sequence is Protein PHTF2 (747 aa).

In terms of domain architecture, PHTF spans 6–153 (TDAIVWYQKK…VHCQIVSTRT (148 aa)). A run of 2 helical transmembrane segments spans residues 98–118 (VIFS…VLFC) and 126–146 (IPLT…TVHC). 2 disordered regions span residues 170–192 (KAAH…TQEG) and 268–365 (EDAA…SETE). Over residues 172–181 (AHLEVHREGD) the composition is skewed to basic and acidic residues. Residues 182 to 192 (GSSTTDNTQEG) show a composition bias toward polar residues. A glycan (N-linked (GlcNAc...) asparagine) is linked at asparagine 291. The segment covering 321-331 (RNRKPHHYKKH) has biased composition (basic residues). Low complexity predominate over residues 340-352 (SGTSCSSRCSSSR). The span at 353–362 (QDSESTRPES) shows a compositional bias: basic and acidic residues. 4 helical membrane-spanning segments follow: residues 459–479 (IGYQ…PFVF), 515–535 (VLIS…LLCV), 596–616 (VIVS…CAQL), and 630–650 (WELV…VTLG). 2 N-linked (GlcNAc...) asparagine glycosylation sites follow: asparagine 659 and asparagine 718. A helical transmembrane segment spans residues 722-742 (VVILSAVSGVISDLLGFNLKL).

The protein resides in the membrane. This chain is Protein PHTF2 (Phtf2), found in Mus musculus (Mouse).